The following is a 309-amino-acid chain: Ornithine carbamoyltransferase (309 aa).

Residues 56 to 59 (STRT), Gln-83, Arg-107, and 134 to 137 (HPCQ) each bind carbamoyl phosphate. L-ornithine is bound by residues Asn-165, Asp-223, and 227-228 (SM). Carbamoyl phosphate contacts are provided by residues 263-264 (CL) and Arg-291.

The protein belongs to the aspartate/ornithine carbamoyltransferase superfamily. OTCase family.

The protein localises to the cytoplasm. It catalyses the reaction carbamoyl phosphate + L-ornithine = L-citrulline + phosphate + H(+). The protein operates within amino-acid biosynthesis; L-arginine biosynthesis; L-arginine from L-ornithine and carbamoyl phosphate: step 1/3. In terms of biological role, reversibly catalyzes the transfer of the carbamoyl group from carbamoyl phosphate (CP) to the N(epsilon) atom of ornithine (ORN) to produce L-citrulline. The polypeptide is Ornithine carbamoyltransferase (Burkholderia cenocepacia (strain HI2424)).